A 196-amino-acid polypeptide reads, in one-letter code: Chloroplastic ATP-dependent Clp protease proteolytic subunit 1 (196 aa).

The Nucleophile role is filled by Ser101. The active site involves His126.

It belongs to the peptidase S14 family. As to quaternary structure, component of the chloroplastic Clp protease core complex which consist of at least 16 proteins: CLPP4 (3 copies), CLPP5 (3 copies), CLPR4 (2 copies), ClpP1 (1 copy), CLPP6 (1 copy), CLPR2 (1 copy), CLPT1 (1 copy), CLPT2 (1 copy) and 3 copies of CLPP3 and/or CLPR1 and/or CLPR3. The core complex is organized in two heptameric rings, one containing CLPP3,4,5,6 in a 1:2:3:1 ratio and the other CLPP1 and CLPR1,2,3,4 in a 3:1:1:1:1 ratio. As to expression, mostly expressed in leaves. Also detected in stems, and to a lower extent, in roots (at protein level).

The protein localises to the plastid. It localises to the chloroplast stroma. It carries out the reaction Hydrolysis of proteins to small peptides in the presence of ATP and magnesium. alpha-casein is the usual test substrate. In the absence of ATP, only oligopeptides shorter than five residues are hydrolyzed (such as succinyl-Leu-Tyr-|-NHMec, and Leu-Tyr-Leu-|-Tyr-Trp, in which cleavage of the -Tyr-|-Leu- and -Tyr-|-Trp bonds also occurs).. Its function is as follows. Cleaves peptides in various proteins in a process that requires ATP hydrolysis. Has a chymotrypsin-like activity. Plays a major role in the degradation of misfolded proteins. The polypeptide is Chloroplastic ATP-dependent Clp protease proteolytic subunit 1 (Arabidopsis thaliana (Mouse-ear cress)).